The sequence spans 1365 residues: Histone-lysine N-methyltransferase NSD2 (1365 aa).

Phosphothreonine is present on residues threonine 110 and threonine 114. Serine 121 bears the Phosphoserine mark. Positions 149 to 169 (ADVSQSEENEQKSDNKTRRNR) are disordered. At serine 172 the chain carries Phosphoserine. In terms of domain architecture, PWWP 1 spans 222 to 286 (VGDLVWSKVS…FEKSLVAFEG (65 aa)). 3 disordered regions span residues 373–455 (MVDS…RKGD), 513–567 (QSEE…DKTA), and 594–658 (CKPL…SKKS). Serine 376 is modified (phosphoserine). Residue threonine 422 is modified to Phosphothreonine. Positions 453-521 (KGDSAAQFLV…AQSEEDSGNG (69 aa)) form a DNA-binding region, HMG box. Over residues 552 to 567 (DKHSLRKRETITDKTA) the composition is skewed to basic and acidic residues. Positions 603–623 (ASATASSALGFNKSSSPSASL) are enriched in polar residues. Acidic residues predominate over residues 632-648 (PGDEPSESPYESADETQ). 3 PHD-type zinc fingers span residues 667 to 713 (EYVC…CASG), 714 to 770 (IHSC…CHAS), and 831 to 875 (VSWC…CRAG). The 63-residue stretch at 880–942 (FQDIIWVKLG…QARVFPYMEG (63 aa)) folds into the PWWP 2 domain. Residues 1011-1061 (SEIPKCNCKPTDENPCGSDSECLNRMLMFECHPQVCPAGEYCQNQCFTKRQ) enclose the AWS domain. Zn(2+) is bound by residues cysteine 1016, cysteine 1018, cysteine 1026, cysteine 1032, cysteine 1041, cysteine 1046, and cysteine 1052. In terms of domain architecture, SET spans 1063 to 1180 (PETKIIKTDG…AGTELTFNYN (118 aa)). S-adenosyl-L-methionine is bound by residues tryptophan 1075, 1115-1118 (THFY), and 1141-1142 (NH). Zn(2+) is bound at residue cysteine 1144. Residue asparagine 1186 participates in S-adenosyl-L-methionine binding. In terms of domain architecture, Post-SET spans 1187–1203 (EKTVCRCGASNCSGFLG). Position 1191 (cysteine 1191) interacts with Zn(2+). Position 1192 (arginine 1192) interacts with S-adenosyl-L-methionine. Cysteine 1193 and cysteine 1198 together coordinate Zn(2+). Residues 1206 to 1232 (PKTSASLSSEEKGKKAKKKTRRRRAKG) form a disordered region. A compositionally biased stretch (basic residues) spans 1219–1230 (KKAKKKTRRRRA). Residues 1239–1286 (EDECFRCGDGGQLVLCDRKFCTKAYHLSCLGLGKRPFGKWECPWHHCD) form a PHD-type 4; atypical zinc finger. The interval 1329–1365 (RADSSSSTKTEKPFPESLKSKGKRKKRRCWRRVTDGK) is disordered. Over residues 1348 to 1359 (SKGKRKKRRCWR) the composition is skewed to basic residues.

The protein belongs to the class V-like SAM-binding methyltransferase superfamily. Histone-lysine methyltransferase family. SET2 subfamily. As to quaternary structure, interacts with HDAC1. Interacts (via PHD-type zinc fingers 1, 2 and 3) with SALL1. Interacts (via PHD-type 1, 2 and 3) with SALL4. Interacts with NANOG. Interacts with OGT. Interacts (via HMG box) with NKX2-5. In terms of tissue distribution, during B-cell development, expressed in early B2 cell progenitors (pre- and pro-B cells) with a decrease in expression at later stages.

The protein resides in the nucleus. Its subcellular location is the chromosome. It catalyses the reaction L-lysyl(36)-[histone H3] + S-adenosyl-L-methionine = N(6)-methyl-L-lysyl(36)-[histone H3] + S-adenosyl-L-homocysteine + H(+). The enzyme catalyses L-lysyl(36)-[histone H3] + 2 S-adenosyl-L-methionine = N(6),N(6)-dimethyl-L-lysyl(36)-[histone H3] + 2 S-adenosyl-L-homocysteine + 2 H(+). Histone methyltransferase which specifically dimethylates nucleosomal histone H3 at 'Lys-36' (H3K36me2). Also monomethylates nucleosomal histone H3 at 'Lys-36' (H3K36me) in vitro. Does not trimethylate nucleosomal histone H3 at 'Lys-36' (H3K36me3). However, specifically trimethylates histone H3 at 'Lys-36' (H3K36me3) at euchromatic regions in embryonic stem (ES) cells. By methylating histone H3 at 'Lys-36', involved in the regulation of gene transcription during various biological processes. In ES cells, associates with developmental transcription factors such as SALL1 and represses inappropriate gene transcription mediated by histone deacetylation. During heart development, associates with transcription factor NKX2-5 to repress transcription of NKX2-5 target genes. Plays an essential role in adipogenesis, by regulating expression of genes involved in pre-adipocyte differentiation. During T-cell receptor (TCR) and CD28-mediated T-cell activation, promotes the transcription of transcription factor BCL6 which is required for follicular helper T (Tfh) cell differentiation. During B-cell development, required for the generation of the B1 lineage. During B2 cell activation, may contribute to the control of isotype class switch recombination (CRS), splenic germinal center formation, and the humoral immune response. Plays a role in class switch recombination of the immunoglobulin heavy chain (IgH) locus during B-cell activation. By regulating the methylation of histone H3 at 'Lys-36' and histone H4 at 'Lys-20' at the IgH locus, involved in TP53BP1 recruitment to the IgH switch region and promotes the transcription of IgA. Its function is as follows. Histone methyltransferase which specifically dimethylates nucleosomal histone H3 at 'Lys-36' (H3K36me2). Mono-, di- and tri-methylates histone H3 at 'Lys-27' (H3K27me, H3K27me2, H3K27me3). Methylation of histone H3 at 'Lys-27' is controversial. May act as a transcription regulator that binds DNA and suppresses IL5 transcription through HDAC recruitment. The protein is Histone-lysine N-methyltransferase NSD2 (Nsd2) of Mus musculus (Mouse).